Reading from the N-terminus, the 407-residue chain is Putative cystathionine beta-lyase (407 aa).

The residue at position 237 (K237) is an N6-(pyridoxal phosphate)lysine.

The protein belongs to the class-II pyridoxal-phosphate-dependent aminotransferase family. MalY/PatB cystathionine beta-lyase subfamily. Pyridoxal 5'-phosphate serves as cofactor.

The catalysed reaction is L,L-cystathionine + H2O = L-homocysteine + pyruvate + NH4(+). The enzyme catalyses an S-substituted L-cysteine + H2O = a thiol + pyruvate + NH4(+). The protein operates within amino-acid biosynthesis; L-methionine biosynthesis via de novo pathway; L-homocysteine from L-cystathionine: step 1/1. The protein is Putative cystathionine beta-lyase of Mycobacterium tuberculosis (strain CDC 1551 / Oshkosh).